The chain runs to 338 residues: UDP-glucose 4-epimerase (338 aa).

NAD(+)-binding positions include 11–12 (YI), 31–36 (DNLCNS), 58–59 (DI), 80–84 (FAGLK), Asn99, Ser124, Tyr149, Lys153, and Phe178. Residues Ser124 and Tyr149 each contribute to the substrate site. The active-site Proton acceptor is Tyr149. Residues Asn179, 199–200 (NL), 216–218 (SVF), Arg231, and 292–295 (RPGD) each bind substrate.

Belongs to the NAD(P)-dependent epimerase/dehydratase family. Homodimer. NAD(+) is required as a cofactor.

The catalysed reaction is UDP-alpha-D-glucose = UDP-alpha-D-galactose. Its pathway is carbohydrate metabolism; galactose metabolism. Involved in the metabolism of galactose. Catalyzes the conversion of UDP-galactose (UDP-Gal) to UDP-glucose (UDP-Glc) through a mechanism involving the transient reduction of NAD. In Pasteurella multocida (strain Pm70), this protein is UDP-glucose 4-epimerase (galE).